A 171-amino-acid chain; its full sequence is 3-hydroxydecanoyl-[acyl-carrier-protein] dehydratase (171 aa).

H70 is an active-site residue.

Belongs to the thioester dehydratase family. FabA subfamily. In terms of assembly, homodimer.

Its subcellular location is the cytoplasm. The catalysed reaction is a (3R)-hydroxyacyl-[ACP] = a (2E)-enoyl-[ACP] + H2O. The enzyme catalyses (3R)-hydroxydecanoyl-[ACP] = (2E)-decenoyl-[ACP] + H2O. It catalyses the reaction (2E)-decenoyl-[ACP] = (3Z)-decenoyl-[ACP]. The protein operates within lipid metabolism; fatty acid biosynthesis. Functionally, necessary for the introduction of cis unsaturation into fatty acids. Catalyzes the dehydration of (3R)-3-hydroxydecanoyl-ACP to E-(2)-decenoyl-ACP and then its isomerization to Z-(3)-decenoyl-ACP. Can catalyze the dehydratase reaction for beta-hydroxyacyl-ACPs with saturated chain lengths up to 16:0, being most active on intermediate chain length. The protein is 3-hydroxydecanoyl-[acyl-carrier-protein] dehydratase of Stutzerimonas stutzeri (strain A1501) (Pseudomonas stutzeri).